Here is a 252-residue protein sequence, read N- to C-terminus: NADH-quinone oxidoreductase subunit E (252 aa).

Positions 114, 119, 155, and 159 each coordinate [2Fe-2S] cluster. Residues 211–252 are disordered; that stretch reads LAGLPDQRPDEGQGGPGAPTLAGLQVARKNDMQAPPTPGADE.

The protein belongs to the complex I 24 kDa subunit family. [2Fe-2S] cluster serves as cofactor.

The catalysed reaction is a quinone + NADH + 5 H(+)(in) = a quinol + NAD(+) + 4 H(+)(out). Its function is as follows. NDH-1 shuttles electrons from NADH, via FMN and iron-sulfur (Fe-S) centers, to quinones in the respiratory chain. The immediate electron acceptor for the enzyme in this species is believed to be menaquinone. Couples the redox reaction to proton translocation (for every two electrons transferred, four hydrogen ions are translocated across the cytoplasmic membrane), and thus conserves the redox energy in a proton gradient. The sequence is that of NADH-quinone oxidoreductase subunit E (nuoE) from Mycobacterium bovis (strain ATCC BAA-935 / AF2122/97).